The chain runs to 447 residues: MTKQIITLVGRPNVGKSTLFNRLSIRKKAIVHDLPGVTRDRKYTDGKIGSFEFLLIDTPGLDEHPNSMGKRLIEQTTKAILEADLICFMVDARSGILPDDKLLSSFVRKYNKPAILVVNKCEKAFDFDKEYYKLGFDSMIAISAEHGTGLIDLYDEIIAKLPEEESIETNIADPIKGDCLQIVVSGRPNAGKSTFINALINDERLLTGPEAGITRESIEIDWQYKNNHIKLIDTAGLRKKSTITESLEKLSASDTINSIKLANTVILMIDALAPLKQQDLNIASHVVNEGRSIVIVVNKWDLVKESEKEAFQEEFYYQINTHLPQVKGIPVLFISAINKQNIEQVLDACLKIYKIWNKKITTSKLNEWLNFTTEAHLLPLQKGGRRVRVKYMTQTKTRPPTFKLFSNNPEKITDSYTRYLVNNMREAFDMPGVPIRFTYVKTKNPYV.

EngA-type G domains lie at 4 to 165 and 180 to 357; these read QIIT…PEEE and LQIV…KIWN. GTP is bound by residues 10-17, 57-61, 119-122, 186-193, 233-237, and 298-301; these read GRPNVGKS, DTPGL, NKCE, GRPNAGKS, DTAGL, and NKWD. One can recognise a KH-like domain in the interval 358-443; that stretch reads KKITTSKLNE…PIRFTYVKTK (86 aa).

This sequence belongs to the TRAFAC class TrmE-Era-EngA-EngB-Septin-like GTPase superfamily. EngA (Der) GTPase family. As to quaternary structure, associates with the 50S ribosomal subunit.

In terms of biological role, GTPase that plays an essential role in the late steps of ribosome biogenesis. The chain is GTPase Der from Rickettsia rickettsii (strain Sheila Smith).